A 38-amino-acid polypeptide reads, in one-letter code: Large ribosomal subunit protein bL36 (38 aa).

Belongs to the bacterial ribosomal protein bL36 family.

The protein is Large ribosomal subunit protein bL36 of Phytoplasma australiense.